A 152-amino-acid chain; its full sequence is UPF0178 protein SAB0630c (152 aa).

This sequence belongs to the UPF0178 family.

The sequence is that of UPF0178 protein SAB0630c from Staphylococcus aureus (strain bovine RF122 / ET3-1).